Reading from the N-terminus, the 164-residue chain is 6,7-dimethyl-8-ribityllumazine synthase 1 (164 aa).

5-amino-6-(D-ribitylamino)uracil contacts are provided by residues Phe27, 58-60 (SLE), and 87-89 (TII). A (2S)-2-hydroxy-3-oxobutyl phosphate-binding site is contributed by 92 to 93 (DT). His95 (proton donor) is an active-site residue. Asn120 contributes to the 5-amino-6-(D-ribitylamino)uracil binding site. Arg134 provides a ligand contact to (2S)-2-hydroxy-3-oxobutyl phosphate.

Belongs to the DMRL synthase family. Homopentamer.

The enzyme catalyses (2S)-2-hydroxy-3-oxobutyl phosphate + 5-amino-6-(D-ribitylamino)uracil = 6,7-dimethyl-8-(1-D-ribityl)lumazine + phosphate + 2 H2O + H(+). It functions in the pathway cofactor biosynthesis; riboflavin biosynthesis; riboflavin from 2-hydroxy-3-oxobutyl phosphate and 5-amino-6-(D-ribitylamino)uracil: step 1/2. In terms of biological role, catalyzes the formation of 6,7-dimethyl-8-ribityllumazine by condensation of 5-amino-6-(D-ribitylamino)uracil with 3,4-dihydroxy-2-butanone 4-phosphate. This is the penultimate step in the biosynthesis of riboflavin. This Mesorhizobium japonicum (strain LMG 29417 / CECT 9101 / MAFF 303099) (Mesorhizobium loti (strain MAFF 303099)) protein is 6,7-dimethyl-8-ribityllumazine synthase 1 (ribH1).